We begin with the raw amino-acid sequence, 1693 residues long: 1-phosphatidylinositol 4,5-bisphosphate phosphodiesterase eta-1 (1693 aa).

One can recognise a PH domain in the interval 20 to 128 (SVMQSGTQMI…WITGLKYLMA (109 aa)). 3 EF-hand domains span residues 142–177 (THDQWVKQTFEEADKNGDGLLNIEEIHQLMHKLNVN), 178–214 (LPRRKVRQMFQEADTDENQGTLTFEEFCVFYKMMSLR), and 226–246 (DKKDHLTVEELAQFLKVEQKM). Positions 155, 157, 159, and 166 each coordinate Ca(2+). One can recognise a PI-PLC X-box domain in the interval 299–444 (QDMDQPLCNY…LKGKILVKGK (146 aa)). Histidine 314 is a catalytic residue. Positions 315, 344, and 346 each coordinate Ca(2+). The active site involves histidine 358. Residue glutamate 393 coordinates Ca(2+). Substrate-binding residues include lysine 442 and lysine 444. Residues 526–585 (LNAHLKQSPDVKESGKKSHGRSLMTNFGKHKKTTKSRSKSYSTDDEEDTQQSTGKEGGQL) form a disordered region. Basic and acidic residues predominate over residues 532-541 (QSPDVKESGK). Residues 553 to 563 (GKHKKTTKSRS) are compositionally biased toward basic residues. The region spanning 601–714 (LSDLVVYTNS…GYVLKPQQMC (114 aa)) is the PI-PLC Y-box domain. Substrate is bound by residues serine 627 and arginine 654. In terms of domain architecture, C2 spans 715-843 (KGTFNPFSGD…PGYRHVYLEG (129 aa)). Ca(2+) is bound by residues isoleucine 758, aspartate 760, aspartate 784, aspartate 813, histidine 814, and aspartate 815. Residues 992-1005 (IEGKENSLAEDKDG) are compositionally biased toward basic and acidic residues. 4 disordered regions span residues 992-1014 (IEGKENSLAEDKDGRRKGKASIK), 1052-1089 (TGEQLGMSSPRGGRTTSNATSNCQENPCPSKSLSPKQH), 1300-1329 (LESNLPGSPNTSRGWLPKSPTKGEDWETLK), and 1578-1613 (LSSRSQSRVRNIASRAKEKQEANKQKVPNPSNGAGV). Over residues 1065 to 1086 (RTTSNATSNCQENPCPSKSLSP) the composition is skewed to polar residues. The span at 1592-1601 (RAKEKQEANK) shows a compositional bias: basic and acidic residues.

Requires Ca(2+) as cofactor. As to expression, expressed in brain and to a lower extent in lung. In brain, it is found in cerebrum, cerebellum and spinal cord. In embryo expressed in the notochord, developing spinal cord (in a ventral to dorsal gradient), dorsal root ganglia, cerebellum and dermatomyosome.

The protein resides in the cytoplasm. It localises to the membrane. It catalyses the reaction a 1,2-diacyl-sn-glycero-3-phospho-(1D-myo-inositol-4,5-bisphosphate) + H2O = 1D-myo-inositol 1,4,5-trisphosphate + a 1,2-diacyl-sn-glycerol + H(+). In terms of biological role, the production of the second messenger molecules diacylglycerol (DAG) and inositol 1,4,5-trisphosphate (IP3) is mediated by calcium-activated phosphatidylinositol-specific phospholipase C enzymes. The sequence is that of 1-phosphatidylinositol 4,5-bisphosphate phosphodiesterase eta-1 from Homo sapiens (Human).